The sequence spans 644 residues: 2-isopropylmalate synthase (644 aa).

A disordered region spans residues 1 to 40; the sequence is MTTSESPDAYTESFGAHTIVKPAGPPRVGQPSWNPQRASS. The segment covering 31–40 has biased composition (polar residues); the sequence is PSWNPQRASS. The Pyruvate carboxyltransferase domain maps to 72–346; that stretch reads PLWCAVDLRD…DPQIDFSNID (275 aa). Residues D81, H285, H287, and N321 each coordinate Mg(2+). A regulatory domain region spans residues 491 to 644; that stretch reads PVRPLERIRQ…VVSAVNRAAR (154 aa). A VNTR1 repeat occupies 575–593; the sequence is VTIASPAQPGEAGRHASDP. Positions 581–612 are disordered; it reads AQPGEAGRHASDPVTIASPAQPGEAGRHASDP. The stretch at 594–612 is one VNTR2 repeat; the sequence is VTIASPAQPGEAGRHASDP.

Belongs to the alpha-IPM synthase/homocitrate synthase family. LeuA type 2 subfamily. Homodimer. The cofactor is Mg(2+).

It localises to the cytoplasm. It carries out the reaction 3-methyl-2-oxobutanoate + acetyl-CoA + H2O = (2S)-2-isopropylmalate + CoA + H(+). It functions in the pathway amino-acid biosynthesis; L-leucine biosynthesis; L-leucine from 3-methyl-2-oxobutanoate: step 1/4. Its function is as follows. Catalyzes the condensation of the acetyl group of acetyl-CoA with 3-methyl-2-oxobutanoate (2-ketoisovalerate) to form 3-carboxy-3-hydroxy-4-methylpentanoate (2-isopropylmalate). This Mycobacterium tuberculosis (strain CDC 1551 / Oshkosh) protein is 2-isopropylmalate synthase.